A 351-amino-acid polypeptide reads, in one-letter code: MTLRLLEDWCRGMDMNPRKALLIAGISQSCSVAEIEEALQAGLAPLGEYRLLGRMFRRDENRKVALVGLTAETSHALVPKEIPGKGGIWRVIFKPPDPDNTFLSRLNEFLAGEGMTVGELSRALGHENGSLDPEQGMIPEMWAPMLAQALEALQPALQCLKYKKLRVFSGRESPEPGEEEFGRWMFHTTQMIKAWQVPDVEKRRRLLESLRGPALDVIRVLKINNPLITVDECLQALEEVFGVTDNPRELQVKYLTTYQKDEEKLSAYVLRLEPLLQKLVQRGAIERDAVNQARLDQVIAGAVHKTIRRELNLPEDGPAPGFLQLLVLIKDYEAAEEEEALLQAILEGNFT.

Positions 49-52 (YRLL) match the LIR motif. Residues 120–127 (LSRALGHE) are BH3-like. The tract at residues 202 to 205 (KRRR) is RASSF1-binding.

The protein belongs to the PNMA family. As to quaternary structure, homodimer. Under normal circumstances, held in an inactive conformation by an intramolecular interaction. Interacts with BAX. Binding to RASSF1 isoform A (RASSF1A) relieves this inhibitory interaction and allows further binding to BAX. Also binds to BCL2 and BCLX. Recruited to the TNFRSF1A and TNFRSF10A complexes in response to their respective cognate ligand, after internalization. Interacts with TRIM39. Interacts with RASSF6. Interacts with ATG8 proteins MAP1LC3A, MAP1LC3B and MAP1LC3C. Does not interact with ATG8 proteins GABARAPL1, GABARAPL2 and GABARAP. Interacts with SQSTM1; promoting dissociation of SQSTM1 inclusion bodies that sequester KEAP1. Ubiquitinated and degraded during mitotic exit by APC/C-Cdh1, this modification is inhibited by TRIM39. As to expression, widely expressed, with high levels in heart and brain.

The protein resides in the cytoplasm. It is found in the cytosol. Its subcellular location is the mitochondrion outer membrane. It localises to the extracellular vesicle membrane. Functionally, retrotransposon-derived protein that forms virion-like capsids. Acts as an effector of BAX during apoptosis: enriched at outer mitochondria membrane and associates with BAX upon induction of apoptosis, facilitating BAX-dependent mitochondrial outer membrane permeabilization and apoptosis. Required for death receptor-dependent apoptosis. When associated with RASSF1, promotes BAX conformational change and translocation to mitochondrial membranes in response to TNF and TNFSF10 stimulation. Also promotes autophagy: promotes phagophore closure via association with ATG8 proteins. Acts as an inhibitor of the NFE2L2/NRF2 pathway via interaction with SQSTM1: interaction promotes dissociation of SQSTM1 inclusion bodies that sequester KEAP1, relieving inactivation of the BCR(KEAP1) complex. The sequence is that of Modulator of apoptosis 1 from Homo sapiens (Human).